The primary structure comprises 298 residues: MSQARIIDGKAFAARLREQVAAEVAVLKAEHGLTPGLAVVLVGEDPASQVYVRNKGEQTLAAGMHSETHRLPANASQAELLSLVDRLNDDPAIHGVLVQFPVPDHLSQAAIVAAISPDKDVDGLTVVNAGRLASGLPALTSCTPAGCMVLLRDVVGDLTGKRAVVIGRSNLMGKPMAQLLLAADCTVTIAHSRSRDLPAICREADILVAAVGRAEMVRGDWIKPGATVIDVGISRFPSRDPVAAAAGKTRLVGDVAFDEAKEVAGAITPVPGGVGPMTIAMLLANTVSAAKRLNGIAE.

NADP(+)-binding positions include 167–169, serine 192, and isoleucine 233; that span reads GRS.

This sequence belongs to the tetrahydrofolate dehydrogenase/cyclohydrolase family. In terms of assembly, homodimer.

The catalysed reaction is (6R)-5,10-methylene-5,6,7,8-tetrahydrofolate + NADP(+) = (6R)-5,10-methenyltetrahydrofolate + NADPH. The enzyme catalyses (6R)-5,10-methenyltetrahydrofolate + H2O = (6R)-10-formyltetrahydrofolate + H(+). It functions in the pathway one-carbon metabolism; tetrahydrofolate interconversion. Functionally, catalyzes the oxidation of 5,10-methylenetetrahydrofolate to 5,10-methenyltetrahydrofolate and then the hydrolysis of 5,10-methenyltetrahydrofolate to 10-formyltetrahydrofolate. This Caulobacter sp. (strain K31) protein is Bifunctional protein FolD.